A 698-amino-acid chain; its full sequence is MOXD1 homolog 1 (698 aa).

Positions 1 to 20 (MSVQDVLWIVLTVQLSFGLA) are cleaved as a signal peptide. N36, N140, and N221 each carry an N-linked (GlcNAc...) asparagine glycan. Residues 54–174 (GLYWLKWWIN…DTFKVLWSIG (121 aa)) form the DOMON domain. Y232 is a catalytic residue. Positions 265 and 266 each coordinate Cu cation. An intrachain disulfide couples C272 to C309. The Cu cation site is built by H347, H425, and H427. 2 disulfide bridges follow: C403–C516 and C479–C501. The active site involves H425. An N-linked (GlcNAc...) asparagine glycan is attached at N465. A Cu cation-binding site is contributed by M500. N-linked (GlcNAc...) asparagine glycans are attached at residues N538 and N561.

Belongs to the copper type II ascorbate-dependent monooxygenase family. The cofactor is Cu(2+).

It is found in the secreted. This Drosophila melanogaster (Fruit fly) protein is MOXD1 homolog 1.